A 304-amino-acid chain; its full sequence is MVTQQEKEFLESYPQNCPPDALPGTPGNLDSAQEKALAELRKLLEDAGFIERLDDSTLLRFLRARKFDVQLAKEMFENCEKWRKDYGTDTILQDFHYDEKPLIAKFYPQYYHKTDKDGRPVYFEELGAVNLHEMNKVTSEERMLKNLVWEYESVVQYRLPACSRAAGHLVETSCTIMDLKGISISSAYSVMSYVREASYISQNYYPERMGKFYIINAPFGFSTAFRLFKPFLDPVTVSKIFILGSSYQKELLKQIPAENLPVKFGGKSEVDESKGGLYLSDIGPWRDPKYIGPEGEAPEAFSMK.

Glycyl lysine isopeptide (Lys-Gly) (interchain with G-Cter in ubiquitin) cross-links involve residues Lys42 and Lys84. Residues Glu99–Glu272 form the CRAL-TRIO domain. Ser302 bears the Phosphoserine mark.

Its subcellular location is the golgi apparatus membrane. It is found in the cytoplasm. The enzyme catalyses a 1,2-diacyl-sn-glycero-3-phospho-(1D-myo-inositol)(in) = a 1,2-diacyl-sn-glycero-3-phospho-(1D-myo-inositol)(out). The catalysed reaction is a 1,2-diacyl-sn-glycero-3-phosphocholine(in) = a 1,2-diacyl-sn-glycero-3-phosphocholine(out). Its activity is regulated as follows. The inhibitor activity of SEC14 is controlled by whether PI or PC is bound to SEC14. The pPC-bound form of SEC14 is an inhibitor, while the PI-bound form is not. The phospholipid binding/exchange activity of SEC14 represents a mechanism by which the regulatory activity of SEC14 is itself controlled. Functionally, required for transport of secretory proteins from the Golgi complex. Catalyzes the transfer of phosphatidylinositol (PI) and phosphatidylcholine (PC) between membranes in vitro. Essential for viability and secretion. Exchanges its bound phospholipid with phospholipid monomers that reside in membrane bilayers. Regulates specific trans-Golgi export pathways, like transport from endosomes to the trans-Golgi or transport from the plasma membrane to the vacuole at the level of the endosome. Increased membrane curvature and lipid unsaturation levels at the trans-Golgi membrane promotes membrane binding and phospholipid transfer of SEC14. Thus, SEC14 may act at the trans-Golgi membrane to exchange lipids and promote vesicle formation. The phosphatidylcholine-bound form of SEC14 represses the CDP-choline pathway activity by inhibiting CCTase, the rate-determining enzyme of the CDP-choline pathway. PI binding/transfer is dispensable for function in vivo. Required for trafficking and localization of lipid raft proteins to the plasma membrane. This is SEC14 cytosolic factor (SEC14) from Saccharomyces cerevisiae (strain ATCC 204508 / S288c) (Baker's yeast).